The following is a 2609-amino-acid chain: Beige protein homolog 1 (2609 aa).

Disordered regions lie at residues 1654–1679 and 1691–1729; these read DSKL…APVS and ILPS…KNRT. Residues 1711–1723 are compositionally biased toward acidic residues; the sequence is MEDEEDDVDEEDK. A BEACH-type PH domain is found at 1735 to 1870; the sequence is ESGDSIQDVY…NRDSLYQKLV (136 aa). The 296-residue stretch at 1907 to 2202 folds into the BEACH domain; that stretch reads ANALSFSTTH…QVFKKPHPQR (296 aa). WD repeat units lie at residues 2249 to 2290, 2294 to 2332, 2340 to 2379, 2429 to 2475, and 2507 to 2546; these read KDEV…QPVM, LHSE…PIKA, GHRY…FVSS, NSDE…NAKL, and ATRQ…SNVH. The FYVE-type zinc finger occupies 2550-2604; that stretch reads DNTSELCSLCDSRFSLMEWRSQCRACGNSNVCSDCVSMLKDTNIKTCYECYRQMP.

It localises to the cytoplasm. The protein localises to the membrane. In terms of biological role, may be involved in protein sorting and cell wall formation. The chain is Beige protein homolog 1 (lvs1) from Schizosaccharomyces pombe (strain 972 / ATCC 24843) (Fission yeast).